We begin with the raw amino-acid sequence, 229 residues long: 5'-methylthioadenosine/S-adenosylhomocysteine nucleosidase (229 aa).

Catalysis depends on Glu12, which acts as the Proton acceptor. Substrate is bound by residues Gly78, Ile152, and 173 to 174 (ME). Residue Asp197 is the Proton donor of the active site.

The protein belongs to the PNP/UDP phosphorylase family. MtnN subfamily.

It catalyses the reaction S-adenosyl-L-homocysteine + H2O = S-(5-deoxy-D-ribos-5-yl)-L-homocysteine + adenine. It carries out the reaction S-methyl-5'-thioadenosine + H2O = 5-(methylsulfanyl)-D-ribose + adenine. The catalysed reaction is 5'-deoxyadenosine + H2O = 5-deoxy-D-ribose + adenine. Its pathway is amino-acid biosynthesis; L-methionine biosynthesis via salvage pathway; S-methyl-5-thio-alpha-D-ribose 1-phosphate from S-methyl-5'-thioadenosine (hydrolase route): step 1/2. Catalyzes the irreversible cleavage of the glycosidic bond in both 5'-methylthioadenosine (MTA) and S-adenosylhomocysteine (SAH/AdoHcy) to adenine and the corresponding thioribose, 5'-methylthioribose and S-ribosylhomocysteine, respectively. Also cleaves 5'-deoxyadenosine, a toxic by-product of radical S-adenosylmethionine (SAM) enzymes, into 5-deoxyribose and adenine. The sequence is that of 5'-methylthioadenosine/S-adenosylhomocysteine nucleosidase from Baumannia cicadellinicola subsp. Homalodisca coagulata.